The primary structure comprises 180 residues: Sec-independent protein translocase protein TatB (180 aa).

The helical transmembrane segment at 1-21 (MFDIGWSELLVIGVVALIAIG) threads the bilayer. Positions 77-180 (TRGDLMTRLT…DQTARGAKAS (104 aa)) are disordered. Over residues 105-129 (ADKPSVSSDAASASGSAAPEAGAAE) the composition is skewed to low complexity.

Belongs to the TatB family. In terms of assembly, the Tat system comprises two distinct complexes: a TatABC complex, containing multiple copies of TatA, TatB and TatC subunits, and a separate TatA complex, containing only TatA subunits. Substrates initially bind to the TatABC complex, which probably triggers association of the separate TatA complex to form the active translocon.

It is found in the cell inner membrane. Functionally, part of the twin-arginine translocation (Tat) system that transports large folded proteins containing a characteristic twin-arginine motif in their signal peptide across membranes. Together with TatC, TatB is part of a receptor directly interacting with Tat signal peptides. TatB may form an oligomeric binding site that transiently accommodates folded Tat precursor proteins before their translocation. This Nitrobacter winogradskyi (strain ATCC 25391 / DSM 10237 / CIP 104748 / NCIMB 11846 / Nb-255) protein is Sec-independent protein translocase protein TatB.